The chain runs to 416 residues: Iron-regulated transcriptional activator AFT2 (416 aa).

Residue D53 participates in Zn(2+) binding. Residues R54, H55, K58, I74, E75, R76, S77, D78, and K81 each coordinate DNA. H55 contacts Zn(2+). C86 contributes to the Zn(2+) binding site. S88 lines the DNA pocket. Zn(2+) is bound at residue C109. V119 and R120 together coordinate DNA. Residues H133 and H135 each contribute to the Zn(2+) site. DNA-binding residues include Q157 and N159. Residues 187 to 189 (CDC) carry the CDC [2Fe-2S] cluster binding motif motif.

In terms of assembly, homodimer. Dimerization decreases the DNA-binding activity.

Its subcellular location is the nucleus. Its activity is regulated as follows. Dimerization via the binding of Fe(2+) or a [2Fe-2S] cluster decreases the DNA-binding activity. Transcription factor required for iron homeostasis and resistance to oxidative stress. With AFT1, activates the gene expression in response to low-iron conditions, also called iron regulon. Recognizes the consensus iron-responsive element (Fe-RE) sequence 5'-CACCC-3' in the promoters of target genes. The transcription activation by AFT1 and AFT2 depends on the mitochondrial iron-sulfur protein biosynthesis pathway. In high iron condition, the presence of iron leads to dimerization, which in turn leads to a decrease in DNA affinity. The chain is Iron-regulated transcriptional activator AFT2 from Saccharomyces cerevisiae (strain ATCC 204508 / S288c) (Baker's yeast).